Here is a 135-residue protein sequence, read N- to C-terminus: Small ribosomal subunit protein uS11 (135 aa).

The tract at residues 1–26 (MPPKSRTAGGARKTRRKEKKNVSHGH) is disordered. Over residues 12–23 (RKTRRKEKKNVS) the composition is skewed to basic residues.

This sequence belongs to the universal ribosomal protein uS11 family. Part of the 30S ribosomal subunit. Interacts with proteins S7 and S18. Binds to IF-3.

In terms of biological role, located on the platform of the 30S subunit, it bridges several disparate RNA helices of the 16S rRNA. Forms part of the Shine-Dalgarno cleft in the 70S ribosome. The chain is Small ribosomal subunit protein uS11 from Beutenbergia cavernae (strain ATCC BAA-8 / DSM 12333 / CCUG 43141 / JCM 11478 / NBRC 16432 / NCIMB 13614 / HKI 0122).